An 824-amino-acid polypeptide reads, in one-letter code: Leucine--tRNA ligase (824 aa).

A 'HIGH' region motif is present at residues 42 to 52 (PYPSGKIHMGH). The 'KMSKS' region motif lies at 581 to 585 (KMSKS). Lys584 is an ATP binding site.

The protein belongs to the class-I aminoacyl-tRNA synthetase family.

The protein localises to the cytoplasm. It catalyses the reaction tRNA(Leu) + L-leucine + ATP = L-leucyl-tRNA(Leu) + AMP + diphosphate. The sequence is that of Leucine--tRNA ligase from Geobacter sp. (strain M21).